The primary structure comprises 945 residues: Cysteine-rich, acidic integral membrane protein (945 aa).

A disordered region spans residues 1–20; sequence MGNEAGPIFEESNAEVGTPP. An N-terminal signal peptide occupies residues 1–23; the sequence is MGNEAGPIFEESNAEVGTPPADA. The Extracellular segment spans residues 24-882; it reads VHDDFFFDYK…GKGSSVSAGL (859 aa). Residues N34 and N43 are each glycosylated (N-linked (GlcNAc...) asparagine). 66 repeat units span residues 40–51, 52–63, 64–75, 76–87, 88–99, 100–111, 112–123, 124–135, 136–147, 148–159, 160–171, 172–183, 184–195, 196–207, 208–219, 220–231, 232–243, 244–255, 256–267, 268–279, 280–291, 292–303, 304–315, 316–327, 328–339, 340–351, 352–363, 364–375, 376–387, 388–399, 400–411, 412–423, 424–435, 436–447, 448–459, 460–471, 472–483, 484–495, 496–507, 508–519, 520–531, 532–543, 544–555, 556–567, 568–579, 580–591, 592–603, 604–615, 616–627, 628–639, 640–651, 652–663, 664–675, 676–687, 688–699, 700–711, 712–723, 724–735, 736–747, 748–759, 760–771, 772–783, 784–795, 796–807, 808–819, and 820–831. A 66 X 12 AA tandem repeats of D-D-C-[ND]-I-T-G-D-G-N-E-T region spans residues 40–831; it reads DDCNITGDCN…CNITGDCNET (792 aa). Residues N67, N79, N91, and N103 are each glycosylated (N-linked (GlcNAc...) asparagine). N-linked (GlcNAc...) asparagine glycans are attached at residues N127, N139, and N151. A glycan (N-linked (GlcNAc...) asparagine) is linked at N175. N199, N211, N223, N235, N247, and N259 each carry an N-linked (GlcNAc...) asparagine glycan. N-linked (GlcNAc...) asparagine glycans are attached at residues N283, N295, N307, N319, N331, and N343. Residues N367, N379, N391, N403, and N415 are each glycosylated (N-linked (GlcNAc...) asparagine). Residue N439 is glycosylated (N-linked (GlcNAc...) asparagine). N-linked (GlcNAc...) asparagine glycosylation is found at N463, N475, N487, N499, N511, and N523. N-linked (GlcNAc...) asparagine glycosylation is found at N547, N559, N571, N583, and N595. N-linked (GlcNAc...) asparagine glycosylation occurs at N619. 6 N-linked (GlcNAc...) asparagine glycosylation sites follow: N643, N655, N667, N679, N691, and N703. N-linked (GlcNAc...) asparagine glycosylation is found at N727, N739, N751, N763, and N775. The N-linked (GlcNAc...) asparagine glycan is linked to N799. N823 is a glycosylation site (N-linked (GlcNAc...) asparagine). Residues 883 to 903 traverse the membrane as a helical segment; the sequence is LLLAGSTFLVLAVGLSAVLFL. Over 904–945 the chain is Cytoplasmic; that stretch reads GRERQNAVVICDNEVMMEEVPGCLSDASFAVPVTQSSDEARP.

It localises to the flagellar pocket. The protein localises to the cell membrane. Functionally, supposed to function as cell surface receptor. Possibly involved in receptor-mediated endocytosis. The protein is Cysteine-rich, acidic integral membrane protein (CRAM) of Trypanosoma brucei brucei.